The chain runs to 471 residues: Eremophilane O-acetyltransferase prx11 (471 aa).

It belongs to the fumigaclavine B O-acetyltransferase family. Monomer.

Its pathway is sesquiterpene biosynthesis. Functionally, O-acetyltransferase; part of the gene cluster that mediates the biosynthesis of PR-toxin, a bicyclic sesquiterpene belonging to the eremophilane class and acting as a mycotoxin. The first step of the pathway is catalyzed by the aristolochene synthase which performs the cyclization of trans,trans-farnesyl diphosphate (FPP) to the bicyclic sesquiterpene aristolochene. Following the formation of aristolochene, the non-oxygenated aristolochene is converted to the trioxygenated intermediate eremofortin B, via 7-epi-neopetasone. This conversion appears to involve three enzymes, a hydroxysterol oxidase-like enzyme, the quinone-oxidase prx3 that forms the quinone-type-structure in the bicyclic nucleus of aristolochene with the C8-oxo group and the C-3 hydroxyl group, and the P450 monooxygenase prx9 that introduces the epoxide at the double bond between carbons 1 and 2. No monoxy or dioxy-intermediates have been reported to be released to the broth, so these three early oxidative reactions may be coupled together. Eremofortin B is further oxidized by another P450 monooxygenase, that introduces a second epoxide between carbons 7 and 11 prior to acetylation to eremofortin A by the acetyltransferase prx11. The second epoxidation may be performed by a second P450 monooxygenase. After the acetylation step, eremofortin A is converted to eremofortin C and then to PR-toxin. First the conversion of eremofortin A to eremofortin C proceeds by oxidation of the side chain of the molecule at C-12 and is catalyzed by the short-chain oxidoreductase prx1. The cytochrome P450 monooxygenase prx8 also plays a role in this step. The primary alcohol formed at C-12 is finally oxidized by the short-chain alcohol dehydrogenase prx4 that forms PR-toxin. The protein is Eremophilane O-acetyltransferase prx11 of Penicillium rubens (strain ATCC 28089 / DSM 1075 / NRRL 1951 / Wisconsin 54-1255) (Penicillium chrysogenum).